A 348-amino-acid chain; its full sequence is Methylthioribose-1-phosphate isomerase (348 aa).

Substrate is bound by residues 54–56 (RGA), R96, and Q199. The active-site Proton donor is D240. 250-251 (NK) provides a ligand contact to substrate.

The protein belongs to the eIF-2B alpha/beta/delta subunits family. MtnA subfamily.

It carries out the reaction 5-(methylsulfanyl)-alpha-D-ribose 1-phosphate = 5-(methylsulfanyl)-D-ribulose 1-phosphate. Its pathway is amino-acid biosynthesis; L-methionine biosynthesis via salvage pathway; L-methionine from S-methyl-5-thio-alpha-D-ribose 1-phosphate: step 1/6. Its function is as follows. Catalyzes the interconversion of methylthioribose-1-phosphate (MTR-1-P) into methylthioribulose-1-phosphate (MTRu-1-P). This Thioalkalivibrio sulfidiphilus (strain HL-EbGR7) protein is Methylthioribose-1-phosphate isomerase.